We begin with the raw amino-acid sequence, 160 residues long: SsrA-binding protein (160 aa).

It belongs to the SmpB family.

It localises to the cytoplasm. Required for rescue of stalled ribosomes mediated by trans-translation. Binds to transfer-messenger RNA (tmRNA), required for stable association of tmRNA with ribosomes. tmRNA and SmpB together mimic tRNA shape, replacing the anticodon stem-loop with SmpB. tmRNA is encoded by the ssrA gene; the 2 termini fold to resemble tRNA(Ala) and it encodes a 'tag peptide', a short internal open reading frame. During trans-translation Ala-aminoacylated tmRNA acts like a tRNA, entering the A-site of stalled ribosomes, displacing the stalled mRNA. The ribosome then switches to translate the ORF on the tmRNA; the nascent peptide is terminated with the 'tag peptide' encoded by the tmRNA and targeted for degradation. The ribosome is freed to recommence translation, which seems to be the essential function of trans-translation. In Dinoroseobacter shibae (strain DSM 16493 / NCIMB 14021 / DFL 12), this protein is SsrA-binding protein.